A 117-amino-acid polypeptide reads, in one-letter code: Virion membrane protein A21 (117 aa).

A helical; Signal-anchor for type III membrane protein membrane pass occupies residues 1–21; that stretch reads MITLFLILCYFILIFNIIVPA. The Virion surface segment spans residues 22 to 117; it reads ISEKMRRERA…RAYSDLFFTT (96 aa).

Belongs to the chordopoxvirinae A21 family. As to quaternary structure, envelope protein part of a stable entry-fusion complex (EFC) which is at least composed of proteins A16, A21, A28, G3, G9, H2, J5, and L5. Formation of the viral membrane is necessary for the assembly of the complex. In terms of processing, contains two intramolecular disulfide bonds. They are created by the viral disulfide bond formation pathway, a poxvirus-specific pathway that operates on the cytoplasmic side of the MV membranes.

Its subcellular location is the virion membrane. Envelope protein part of the entry-fusion complex responsible for the virus membrane fusion with host cell membrane during virus entry. The sequence is that of Virion membrane protein A21 from Vaccinia virus (strain Ankara) (VACV).